Consider the following 291-residue polypeptide: Sulfotransferase 1A1 (291 aa).

44–49 (KSGTTW) contacts 3'-phosphoadenylyl sulfate. Residue 102–104 (KTH) participates in substrate binding. The active-site Proton acceptor is the His-104. Residues Arg-126, Ser-134, Tyr-189, 223-228 (TSFKKM), and 251-255 (FMRKG) contribute to the 3'-phosphoadenylyl sulfate site. Position 134 is a phosphoserine (Ser-134).

The protein belongs to the sulfotransferase 1 family. Homodimer. The N-terminus is blocked. As to expression, liver, kidney, heart and colon.

The protein localises to the cytoplasm. It carries out the reaction a phenol + 3'-phosphoadenylyl sulfate = an aryl sulfate + adenosine 3',5'-bisphosphate + H(+). The enzyme catalyses 17beta-estradiol + 3'-phosphoadenylyl sulfate = 17beta-estradiol 3-sulfate + adenosine 3',5'-bisphosphate + H(+). It catalyses the reaction 4-ethylphenol + 3'-phosphoadenylyl sulfate = 4-ethylphenyl sulfate + adenosine 3',5'-bisphosphate + H(+). The catalysed reaction is 4-nitrophenol + 3'-phosphoadenylyl sulfate = 4-nitrophenyl sulfate + adenosine 3',5'-bisphosphate. It carries out the reaction dopamine + 3'-phosphoadenylyl sulfate = dopamine 3-O-sulfate + adenosine 3',5'-bisphosphate + H(+). The enzyme catalyses dopamine + 3'-phosphoadenylyl sulfate = dopamine 4-O-sulfate + adenosine 3',5'-bisphosphate + H(+). It catalyses the reaction 3,3',5-triiodo-L-thyronine + 3'-phosphoadenylyl sulfate = 3,3',5-triiodo-L-thyronine sulfate + adenosine 3',5'-bisphosphate + H(+). The catalysed reaction is 3,3',5'-triiodo-L-thyronine + 3'-phosphoadenylyl sulfate = 3,3',5'-triiodo-L-thyronine sulfate + adenosine 3',5'-bisphosphate + H(+). It carries out the reaction 3,3'-diiodo-L-thyronine + 3'-phosphoadenylyl sulfate = 3,3'-diiodo-L-thyronine sulfate + adenosine 3',5'-bisphosphate + H(+). The enzyme catalyses L-thyroxine + 3'-phosphoadenylyl sulfate = L-thyroxine sulfate + adenosine 3',5'-bisphosphate + H(+). Its function is as follows. Sulfotransferase that utilizes 3'-phospho-5'-adenylyl sulfate (PAPS) as sulfonate donor to catalyze the sulfate conjugation of a wide variety of acceptor molecules bearing a hydroxyl or an amine group. Sulfonation increases the water solubility of most compounds, and therefore their renal excretion, but it can also result in bioactivation to form active metabolites. Displays broad substrate specificity for small phenolic compounds. Plays an important roles in the sulfonation of endogenous molecules such as steroid hormones. Mediates the sulfate conjugation of a variety of xenobiotics, including the drugs acetaminophen and minoxidil. Mediates also the metabolic activation of carcinogenic N-hydroxyarylamines leading to highly reactive intermediates capable of forming DNA adducts, potentially resulting in mutagenesis. May play a role in gut microbiota-host metabolic interaction. O-sulfonates 4-ethylphenol (4-EP), a dietary tyrosine-derived metabolite produced by gut bacteria. The product 4-EPS crosses the blood-brain barrier and may negatively regulate oligodendrocyte maturation and myelination, affecting the functional connectivity of different brain regions associated with the limbic system. Catalyzes the sulfate conjugation of dopamine. Catalyzes the sulfation of T4 (L-thyroxine/3,5,3',5'-tetraiodothyronine), T3 (3,5,3'-triiodothyronine), rT3 (3,3',5'-triiodothyronine) and 3,3'-T2 (3,3'-diiodothyronine), with a substrate preference of 3,3'-T2 &gt; rT3 &gt; T3 &gt; T4. This Rattus norvegicus (Rat) protein is Sulfotransferase 1A1 (Sult1a1).